We begin with the raw amino-acid sequence, 219 residues long: Probable GTP-binding protein EngB (219 aa).

Residues 24 to 207 form the EngB-type G domain; that stretch reads VQPEIAFAGR…HELIESWLRP (184 aa). GTP contacts are provided by residues 32 to 39, 59 to 63, 81 to 84, 148 to 151, and 186 to 188; these read GRSNAGKS, GRTQH, DLPG, TKCD, and FSA. Residues Ser-39 and Thr-61 each contribute to the Mg(2+) site.

Belongs to the TRAFAC class TrmE-Era-EngA-EngB-Septin-like GTPase superfamily. EngB GTPase family. It depends on Mg(2+) as a cofactor.

Its function is as follows. Necessary for normal cell division and for the maintenance of normal septation. The polypeptide is Probable GTP-binding protein EngB (Burkholderia vietnamiensis (strain G4 / LMG 22486) (Burkholderia cepacia (strain R1808))).